Consider the following 898-residue polypeptide: Filament-like plant protein 7 (898 aa).

Coiled coils occupy residues Glu-23 to Ala-224 and Glu-287 to Ser-320. 3 disordered regions span residues Asp-429–Ser-482, Pro-693–Glu-723, and Lys-777–Ser-835. A compositionally biased stretch (low complexity) spans Ser-434–Glu-459. Residues Ala-460–Ser-469 are compositionally biased toward polar residues. Positions Val-703–Ala-764 form a coiled coil. Over residues Met-808–Lys-822 the composition is skewed to basic and acidic residues.

The protein belongs to the FPP family. As to quaternary structure, interacts with WPP/MAF proteins.

This chain is Filament-like plant protein 7 (FPP7), found in Arabidopsis thaliana (Mouse-ear cress).